We begin with the raw amino-acid sequence, 323 residues long: Olfactory receptor 4K5 (323 aa).

Over 1–25 (MDKSNSSVVSEFVLLGLCSSQKLQL) the chain is Extracellular. Residue asparagine 5 is glycosylated (N-linked (GlcNAc...) asparagine). The chain crosses the membrane as a helical span at residues 26–49 (FYFCFFSVLYTVIVLGNLLIILTV). Topologically, residues 50-57 (TSDTSLHS) are cytoplasmic. Residues 58-79 (PMYFLLGNLSFVDICQASFATP) traverse the membrane as a helical segment. Residues 80 to 100 (KMIADFLSAHETISFSGCIAQ) lie on the Extracellular side of the membrane. Cysteine 97 and cysteine 189 are oxidised to a cystine. A helical transmembrane segment spans residues 101 to 120 (IFFIHLFTGGEMVLLVSMAY). At 121–139 (DRYVAICKPLYYVVIMSRR) the chain is on the cytoplasmic side. Residues 140-158 (TCTVLVMISWAVSLVHTLS) traverse the membrane as a helical segment. Residues 159-195 (QLSFTVNLPFCGPNVVDSFFCDLPRVTKLACLDSYII) lie on the Extracellular side of the membrane. The helical transmembrane segment at 196–219 (EILIVVNSGILSLSTFSLLVSSYI) threads the bilayer. At 220–235 (IILVTVWLKSSAAMAK) the chain is on the cytoplasmic side. Residues 236–258 (AFSTLASHIAVVILFFGPCIFIY) form a helical membrane-spanning segment. The Extracellular segment spans residues 259-269 (VWPFTISPLDK). The chain crosses the membrane as a helical span at residues 270 to 289 (FLAIFYTVFTPVLNPIIYTL). At 290–323 (RNRDMKAAVRKIVNHYLRPRRISEMSLVVRTSFH) the chain is on the cytoplasmic side.

Belongs to the G-protein coupled receptor 1 family.

The protein resides in the cell membrane. Odorant receptor. In Homo sapiens (Human), this protein is Olfactory receptor 4K5 (OR4K5).